Reading from the N-terminus, the 247-residue chain is MKFLLSNDDGYFAPGLAMLAQTLQRYGEVVVVAPERDRSGASNSLTLDRPLTVRKAANGFHYVNGTPTDCVHLAVTGFLDFRPNMIFTGINHGPNMGDDTLYSGTVAAATEGFMLGIPSVAVSLAGHSGKHFASAGKVVEQLVERCLEEPFQQPVLLNVNVPDAPPEEVGALQVTRLGRRHAAQPVIKSQNPRGETIYWVGPVGAVQDAGAGTDFGCVASKQVSVTPLMLDLTAYGQLDRISTWLHR.

A divalent metal cation is bound by residues D8, D9, S39, and N91.

It belongs to the SurE nucleotidase family. Requires a divalent metal cation as cofactor.

The protein localises to the cytoplasm. It carries out the reaction a ribonucleoside 5'-phosphate + H2O = a ribonucleoside + phosphate. Its function is as follows. Nucleotidase that shows phosphatase activity on nucleoside 5'-monophosphates. The protein is 5'-nucleotidase SurE of Chromobacterium violaceum (strain ATCC 12472 / DSM 30191 / JCM 1249 / CCUG 213 / NBRC 12614 / NCIMB 9131 / NCTC 9757 / MK).